The sequence spans 241 residues: Chalcone--flavanone isomerase C (241 aa).

Substrate is bound by residues threonine 50, asparagine 115, and serine 192.

The protein belongs to the chalcone isomerase family.

The enzyme catalyses a chalcone = a flavanone.. It functions in the pathway secondary metabolite biosynthesis; flavonoid biosynthesis. Its function is as follows. Catalyzes the intramolecular cyclization of bicyclic chalcones into tricyclic (S)-flavanones. Responsible for the isomerization of 4,2',4',6'-tetrahydroxychalcone (also termed chalcone) into naringenin. The protein is Chalcone--flavanone isomerase C (CHI3) of Petunia hybrida (Petunia).